We begin with the raw amino-acid sequence, 947 residues long: Protein translocase subunit SecA (947 aa).

Residues Q85, G103–T107, and D514 contribute to the ATP site. A disordered region spans residues A864–K947. The segment covering P884–H900 has biased composition (basic and acidic residues). Positions E934–K947 are enriched in basic residues.

It belongs to the SecA family. Monomer and homodimer. Part of the essential Sec protein translocation apparatus which comprises SecA, SecYEG and auxiliary proteins SecDF. Other proteins may also be involved.

The protein localises to the cell membrane. Its subcellular location is the cytoplasm. The enzyme catalyses ATP + H2O + cellular proteinSide 1 = ADP + phosphate + cellular proteinSide 2.. Part of the Sec protein translocase complex. Interacts with the SecYEG preprotein conducting channel. Has a central role in coupling the hydrolysis of ATP to the transfer of proteins into and across the cell membrane, serving as an ATP-driven molecular motor driving the stepwise translocation of polypeptide chains across the membrane. The chain is Protein translocase subunit SecA from Streptomyces lividans.